We begin with the raw amino-acid sequence, 419 residues long: Serine hydroxymethyltransferase (419 aa).

(6S)-5,6,7,8-tetrahydrofolate is bound by residues Leu121 and 125 to 127 (GHL). At Lys229 the chain carries N6-(pyridoxal phosphate)lysine. A (6S)-5,6,7,8-tetrahydrofolate-binding site is contributed by 354–356 (SPF).

Belongs to the SHMT family. Homodimer. Pyridoxal 5'-phosphate serves as cofactor.

The protein resides in the cytoplasm. The enzyme catalyses (6R)-5,10-methylene-5,6,7,8-tetrahydrofolate + glycine + H2O = (6S)-5,6,7,8-tetrahydrofolate + L-serine. It participates in one-carbon metabolism; tetrahydrofolate interconversion. It functions in the pathway amino-acid biosynthesis; glycine biosynthesis; glycine from L-serine: step 1/1. Catalyzes the reversible interconversion of serine and glycine with tetrahydrofolate (THF) serving as the one-carbon carrier. This reaction serves as the major source of one-carbon groups required for the biosynthesis of purines, thymidylate, methionine, and other important biomolecules. Also exhibits THF-independent aldolase activity toward beta-hydroxyamino acids, producing glycine and aldehydes, via a retro-aldol mechanism. The sequence is that of Serine hydroxymethyltransferase from Coxiella burnetii (strain RSA 493 / Nine Mile phase I).